A 138-amino-acid chain; its full sequence is Large ribosomal subunit protein uL16 (138 aa).

The segment covering 1–16 has biased composition (basic residues); that stretch reads MLIPRRVKHRKQHHPG. The interval 1–25 is disordered; the sequence is MLIPRRVKHRKQHHPGRSGQATGGT.

Belongs to the universal ribosomal protein uL16 family. As to quaternary structure, part of the 50S ribosomal subunit.

Binds 23S rRNA and is also seen to make contacts with the A and possibly P site tRNAs. The polypeptide is Large ribosomal subunit protein uL16 (Renibacterium salmoninarum (strain ATCC 33209 / DSM 20767 / JCM 11484 / NBRC 15589 / NCIMB 2235)).